The following is a 268-amino-acid chain: Ribosomal RNA small subunit methyltransferase A (268 aa).

6 residues coordinate S-adenosyl-L-methionine: Asn18, Leu20, Gly45, Glu66, Asp91, and Asn112.

It belongs to the class I-like SAM-binding methyltransferase superfamily. rRNA adenine N(6)-methyltransferase family. RsmA subfamily.

It is found in the cytoplasm. The catalysed reaction is adenosine(1518)/adenosine(1519) in 16S rRNA + 4 S-adenosyl-L-methionine = N(6)-dimethyladenosine(1518)/N(6)-dimethyladenosine(1519) in 16S rRNA + 4 S-adenosyl-L-homocysteine + 4 H(+). Its function is as follows. Specifically dimethylates two adjacent adenosines (A1518 and A1519) in the loop of a conserved hairpin near the 3'-end of 16S rRNA in the 30S particle. May play a critical role in biogenesis of 30S subunits. The sequence is that of Ribosomal RNA small subunit methyltransferase A from Shewanella baltica (strain OS185).